The following is a 134-amino-acid chain: Profilin-1 (134 aa).

The cysteines at positions 13 and 118 are disulfide-linked. The Involved in PIP2 interaction signature appears at 84–100 (AVIRGKKGSGGITTKKT). Position 114 is a phosphothreonine (T114).

It belongs to the profilin family. Occurs in many kinds of cells as a complex with monomeric actin in a 1:1 ratio. Post-translationally, phosphorylated by MAP kinases.

The protein resides in the cytoplasm. The protein localises to the cytoskeleton. In terms of biological role, binds to actin and affects the structure of the cytoskeleton. At high concentrations, profilin prevents the polymerization of actin, whereas it enhances it at low concentrations. The chain is Profilin-1 from Olea europaea (Common olive).